The primary structure comprises 324 residues: Phosphomevalonate decarboxylase (324 aa).

The protein belongs to the phosphomevalonate decarboxylase family.

The enzyme catalyses (R)-5-phosphomevalonate + ATP = isopentenyl phosphate + ADP + phosphate + CO2. With respect to regulation, is strongly inhibited by 6-fluoromevalonate monophosphate but shows negligible inhibition by 6-fluoromevalonate diphosphate (a potent inhibitor of the classical mevalonate pathway). In terms of biological role, catalyzes the decarboxylation of mevalonate 5-phosphate (MVAP) to isopentenyl phosphate (IP). Functions in an alternate mevalonate (MVA) pathway leading to isopentenyl diphosphate (IPP), a key precursor for the biosynthesis of isoprenoid compounds such as archaeal membrane lipids. The chain is Phosphomevalonate decarboxylase (mvaD) from Haloferax volcanii (strain ATCC 29605 / DSM 3757 / JCM 8879 / NBRC 14742 / NCIMB 2012 / VKM B-1768 / DS2) (Halobacterium volcanii).